The following is a 247-amino-acid chain: 3-deoxy-manno-octulosonate cytidylyltransferase (247 aa).

The protein belongs to the KdsB family.

Its subcellular location is the cytoplasm. The enzyme catalyses 3-deoxy-alpha-D-manno-oct-2-ulosonate + CTP = CMP-3-deoxy-beta-D-manno-octulosonate + diphosphate. It participates in nucleotide-sugar biosynthesis; CMP-3-deoxy-D-manno-octulosonate biosynthesis; CMP-3-deoxy-D-manno-octulosonate from 3-deoxy-D-manno-octulosonate and CTP: step 1/1. Its pathway is bacterial outer membrane biogenesis; lipopolysaccharide biosynthesis. In terms of biological role, activates KDO (a required 8-carbon sugar) for incorporation into bacterial lipopolysaccharide in Gram-negative bacteria. This is 3-deoxy-manno-octulosonate cytidylyltransferase from Methylorubrum extorquens (strain CM4 / NCIMB 13688) (Methylobacterium extorquens).